Here is a 343-residue protein sequence, read N- to C-terminus: ATP-dependent (S)-NAD(P)H-hydrate dehydratase (343 aa).

A mitochondrion-targeting transit peptide spans 1 to 42 (MAVCPYGAAAVVMALLSAAIAFHCSPLLAVLQRALSLHTAHA). In terms of domain architecture, YjeF C-terminal spans 49–340 (LFQLVRNIVP…AEVGAAFSKL (292 aa)). The residue at position 63 (Lys-63) is an N6-acetyllysine. Residue Tyr-81 is modified to Phosphotyrosine. (6S)-NADPHX contacts are provided by residues Gly-149 and 202–208 (NHVEFSR). Residues 242–246 (KGEQD) and 261–270 (GSSRRCGGQG) contribute to the ATP site. Asp-271 lines the (6S)-NADPHX pocket.

The protein belongs to the NnrD/CARKD family. It depends on Mg(2+) as a cofactor.

It localises to the mitochondrion. It carries out the reaction (6S)-NADHX + ATP = ADP + phosphate + NADH + H(+). It catalyses the reaction (6S)-NADPHX + ATP = ADP + phosphate + NADPH + H(+). Its function is as follows. Catalyzes the dehydration of the S-form of NAD(P)HX at the expense of ATP, which is converted to ADP. Together with NAD(P)HX epimerase, which catalyzes the epimerization of the S- and R-forms, the enzyme allows the repair of both epimers of NAD(P)HX, a damaged form of NAD(P)H that is a result of enzymatic or heat-dependent hydration. The sequence is that of ATP-dependent (S)-NAD(P)H-hydrate dehydratase from Rattus norvegicus (Rat).